The chain runs to 60 residues: Large ribosomal subunit protein bL32 (60 aa).

Over residues 1–20 (MAVPKRKTSPSRRNMRRSHH) the composition is skewed to basic residues. The interval 1-60 (MAVPKRKTSPSRRNMRRSHHALGANSFIEDKDTGELRRPHHVDLKTGMYNGKQILTPKED) is disordered. Over residues 28 to 44 (IEDKDTGELRRPHHVDL) the composition is skewed to basic and acidic residues.

The protein belongs to the bacterial ribosomal protein bL32 family.

In Caulobacter vibrioides (strain ATCC 19089 / CIP 103742 / CB 15) (Caulobacter crescentus), this protein is Large ribosomal subunit protein bL32.